The chain runs to 98 residues: Co-chaperonin GroES (98 aa).

Belongs to the GroES chaperonin family. In terms of assembly, heptamer of 7 subunits arranged in a ring. Interacts with the chaperonin GroEL.

The protein localises to the cytoplasm. Together with the chaperonin GroEL, plays an essential role in assisting protein folding. The GroEL-GroES system forms a nano-cage that allows encapsulation of the non-native substrate proteins and provides a physical environment optimized to promote and accelerate protein folding. GroES binds to the apical surface of the GroEL ring, thereby capping the opening of the GroEL channel. This chain is Co-chaperonin GroES, found in Paenarthrobacter aurescens (strain TC1).